Consider the following 92-residue polypeptide: Major allergen I polypeptide chain 1 (92 aa).

The first 22 residues, 1-22, serve as a signal peptide directing secretion; the sequence is MKGACVLVLLWAALLLISGGNC.

The protein belongs to the secretoglobin family. In terms of assembly, heterotetramer composed of two non-covalently linked disulfide-linked heterodimer of chains 1 and 2. In terms of tissue distribution, saliva and sebaceous glands.

It localises to the secreted. In Felis catus (Cat), this protein is Major allergen I polypeptide chain 1 (CH1).